Consider the following 1221-residue polypeptide: Deubiquitinating protein VCPIP1 (1221 aa).

Residues 1 to 19 (MSQPPPPPPLPPPPPPPEA) are compositionally biased toward pro residues. A disordered region spans residues 1-40 (MSQPPPPPPLPPPPPPPEAPQTSSSLAAAATPGGLSKRRD). The 154-residue stretch at 207–360 (LIPVHVDGDG…RNHYIPLVGI (154 aa)) folds into the OTU domain. Asp215 is an active-site residue. Cys218 functions as the Nucleophile in the catalytic mechanism. Residue His353 is part of the active site. Lys407 is modified (N6-acetyllysine). 2 disordered regions span residues 724–778 (SVMQ…KIRI) and 988–1009 (EATTRSRESSPSHGLLKLGSGG). Phosphoserine occurs at positions 746 and 756. Residues 754 to 770 (PSSAPATPTKAPYSPTT) show a composition bias toward low complexity. Position 762 is a phosphothreonine (Thr762). Phosphoserine is present on residues Ser767, Ser993, Ser997, and Ser1076. Disordered regions lie at residues 1117–1177 (ASMD…TDSR) and 1189–1221 (RSKAQKENSMEEPEEMDSQDAETTNTTEPMDHS). The span at 1143 to 1156 (VSSSVRPGNLQTGL) shows a compositional bias: polar residues. The span at 1162-1173 (LTGGTENLNTET) shows a compositional bias: low complexity. Phosphoserine is present on residues Ser1197 and Ser1206. The segment covering 1198–1208 (MEEPEEMDSQD) has biased composition (acidic residues). The segment covering 1209–1221 (AETTNTTEPMDHS) has biased composition (polar residues).

Binds VCP and the ternary complex containing STX5A, NSFL1C and VCP. Phosphorylated at Ser-1206 by ATM or ATR following induction of covalent DNA-protein cross-links (DPCs). In terms of tissue distribution, widely expressed.

It is found in the nucleus. The protein resides in the cytoplasm. The protein localises to the endoplasmic reticulum. It localises to the golgi apparatus. Its subcellular location is the golgi stack. The enzyme catalyses Thiol-dependent hydrolysis of ester, thioester, amide, peptide and isopeptide bonds formed by the C-terminal Gly of ubiquitin (a 76-residue protein attached to proteins as an intracellular targeting signal).. Functionally, deubiquitinating enzyme involved in DNA repair and reassembly of the Golgi apparatus and the endoplasmic reticulum following mitosis. Necessary for VCP-mediated reassembly of Golgi stacks after mitosis. Plays a role in VCP-mediated formation of transitional endoplasmic reticulum (tER). Mediates dissociation of the ternary complex containing STX5A, NSFL1C and VCP. Also involved in DNA repair following phosphorylation by ATM or ATR: acts by catalyzing deubiquitination of SPRTN, thereby promoting SPRTN recruitment to chromatin and subsequent proteolytic cleavage of covalent DNA-protein cross-links (DPCs). Hydrolyzes 'Lys-11'- and 'Lys-48'-linked polyubiquitin chains. The polypeptide is Deubiquitinating protein VCPIP1 (Rattus norvegicus (Rat)).